The primary structure comprises 1304 residues: Zinc finger CCCH domain-containing protein 4 (1304 aa).

The segment covering 1 to 33 has biased composition (pro residues); sequence MEAVPGTPPPPPSESPPPPSPPPPSTPSPPPCS. The disordered stretch occupies residues 1–387; sequence MEAVPGTPPP…SDHDKPHQQS (387 aa). A compositionally biased stretch (acidic residues) spans 53 to 73; it reads DREDGELEEGELEDDGAEEVQ. Basic and acidic residues predominate over residues 80–99; it reads ERSRKEKGEKHHSDSEEEKS. A phosphoserine mark is found at Ser92 and Ser94. A coiled-coil region spans residues 94-128; sequence SEEEKSHRRLKRKRKKEREKEKRRSKKRRKSKHKR. Residues 100 to 130 show a composition bias toward basic residues; sequence HRRLKRKRKKEREKEKRRSKKRRKSKHKRHA. A compositionally biased stretch (acidic residues) spans 135-144; sequence DFSDFSDDSD. The residue at position 155 (Tyr155) is a Phosphotyrosine. The segment covering 165–174 has biased composition (polar residues); it reads SHQQYSSSHN. Residues 194–218 show a composition bias toward acidic residues; it reads EDYENEQYGEYEGDEEEDMGKEDYD. Residues 219 to 235 are compositionally biased toward basic and acidic residues; the sequence is DFTKELNQYRRAKEGSS. The span at 238-251 shows a compositional bias: basic residues; the sequence is RGSRGRGRGYRGRG. Positions 252-264 are enriched in gly residues; it reads SRGGSRGRGMGRG. A compositionally biased stretch (acidic residues) spans 277 to 303; that stretch reads PEDEEDLYEEEIEYGESEEPMGDDDYD. Residues 304–320 are compositionally biased toward basic and acidic residues; the sequence is DYSKELNQYRRSKDSRG. A compositionally biased stretch (basic residues) spans 322-346; sequence GLSRGRGRGSRGGRGKGMGRGRGRG. The segment covering 357–368 has biased composition (acidic residues); it reads NDDEDFYDDDMG. A compositionally biased stretch (basic and acidic residues) spans 376–387; it reads RRSDHDKPHQQS. C3H1-type zinc fingers lie at residues 389–416, 418–445, and 446–469; these read KKGK…HDIE, PKKR…HGDF, and PCKL…HDPL. Residues 485–495 are compositionally biased toward acidic residues; that stretch reads AEAGAEDEKEV. The segment at 485-567 is disordered; sequence AEAGAEDEKE…LPTHEPLSPQ (83 aa). Composition is skewed to pro residues over residues 506-529 and 538-556; these read LPKP…PAPT and GGPP…PPQM. Arg599 is subject to Asymmetric dimethylarginine. Disordered regions lie at residues 601 to 691, 719 to 970, and 994 to 1304; these read PGPG…DSPH, PGLV…SHIK, and LPIP…PFCQ. Residues 603 to 622 show a composition bias toward pro residues; the sequence is PGGPSGPMGPGPNMGPPGPM. Residues 628 to 660 are compositionally biased toward basic and acidic residues; it reads PDMHPDMHPDMHPDMHPDMHPDMHPDMHPDMHP. The span at 669–683 shows a compositional bias: pro residues; sequence NPGPPMGPGGPPMMP. Residues 778–809 are a coiled coil; it reads ALYLRIQQKQQEEERARRLAESSKQDRENEEG. Residues 787–804 show a composition bias toward basic and acidic residues; the sequence is QQEEERARRLAESSKQDR. A phosphoserine mark is found at Ser816 and Ser817. Residues 824–852 are compositionally biased toward polar residues; the sequence is SSVTSILKTLRQQTSSRPQASVGEPSSSG. Positions 869 to 884 are enriched in basic and acidic residues; that stretch reads SDPRLSRDPRLSRHAE. A phosphoserine mark is found at Ser913, Ser916, and Ser917. Residues 913 to 929 are compositionally biased toward low complexity; that stretch reads SLHSSPAGPSSSKGQPP. Positions 994 to 1005 are enriched in pro residues; the sequence is LPIPKQDVPPVP. Composition is skewed to polar residues over residues 1028–1044 and 1058–1067; these read NTRQ…SGSN and VNVNTPGQSE. Residues 1068–1085 are compositionally biased toward basic and acidic residues; the sequence is KPSDPRVRKTPTDPRLQK. 2 stretches are compositionally biased toward low complexity: residues 1098 to 1129 and 1137 to 1146; these read PCPT…VLAA and SSGQSSVLSG. Ser1104, Ser1109, Ser1111, and Ser1115 each carry phosphoserine. Thr1119 bears the Phosphothreonine mark. A compositionally biased stretch (polar residues) spans 1204-1220; it reads KASTDGATATDRYNSYN. Over residues 1225–1235 the composition is skewed to low complexity; it reads KATAAPTAASS. Phosphoserine occurs at positions 1270 and 1276.

It belongs to the suppressor of sable family. Interacts with WDR82.

The protein resides in the chromosome. In terms of biological role, RNA-binding protein that suppresses transcription of long non-coding RNAs (lncRNAs). LncRNAs are defined as transcripts more than 200 nucleotides that are not translated into protein. Together with WDR82, part of a transcription termination checkpoint that promotes transcription termination of lncRNAs and their subsequent degradation by the exosome. The transcription termination checkpoint is activated by the inefficiently spliced first exon of lncRNAs. This Mus musculus (Mouse) protein is Zinc finger CCCH domain-containing protein 4.